We begin with the raw amino-acid sequence, 225 residues long: Mediator of RNA polymerase II transcription subunit 8 (225 aa).

The tract at residues 1–24 is disordered; sequence MNSIHSANSNTVSTSEINTSQIPT. Residues 170–204 are a coiled coil; the sequence is VEELKYLDSEDEKKETEENKKIENQKYEEELKITA.

This sequence belongs to the Mediator complex subunit 8 family. As to quaternary structure, component of the Mediator complex.

The protein resides in the nucleus. Component of the Mediator complex, a coactivator involved in the regulated transcription of nearly all RNA polymerase II-dependent genes. Mediator functions as a bridge to convey information from gene-specific regulatory proteins to the basal RNA polymerase II transcription machinery. Mediator is recruited to promoters by direct interactions with regulatory proteins and serves as a scaffold for the assembly of a functional preinitiation complex with RNA polymerase II and the general transcription factors. The sequence is that of Mediator of RNA polymerase II transcription subunit 8 (MED8) from Debaryomyces hansenii (strain ATCC 36239 / CBS 767 / BCRC 21394 / JCM 1990 / NBRC 0083 / IGC 2968) (Yeast).